The primary structure comprises 83 residues: Hainantoxin-III 6 (83 aa).

Residues 1–21 form the signal peptide; sequence MKASMFLALAGLVLLFVVGYA. Positions 22 to 48 are excised as a propeptide; sequence SESEEKESPRELLSKIFAVDDFKGEER. 3 cysteine pairs are disulfide-bonded: C50–C65, C57–C70, and C64–C77. L81 is modified (leucine amide).

It belongs to the neurotoxin 10 (Hwtx-1) family. 15 (Hntx-3) subfamily. In terms of assembly, monomer. In terms of tissue distribution, expressed by the venom gland.

It is found in the secreted. Selective antagonist of neuronal tetrodotoxin (TTX)-sensitive voltage-gated sodium channels (IC(50)=1270 nM on Nav1.1/SCN1A, 270 nM on Nav1.2/SCN2A, 491 nM on Nav1.3/SCN3A and 232 nM on Nav1.7/SCN9A). This toxin suppress Nav1.7 current amplitude without significantly altering the activation, inactivation, and repriming kinetics. Short extreme depolarizations partially activate the toxin-bound channel, indicating voltage-dependent inhibition of this toxin. This toxin increases the deactivation of the Nav1.7 current after extreme depolarizations. The toxin-Nav1.7 complex is gradually dissociated upon prolonged strong depolarizations in a voltage-dependent manner, and the unbound toxin rebinds to Nav1.7 after a long repolarization. Moreover, analysis of chimeric channels showed that the DIIS3-S4 linker is critical for toxin binding to Nav1.7. These data are consistent with this toxin interacting with Nav1.7 site 4 and trapping the domain II voltage sensor in the closed state. This Cyriopagopus hainanus (Chinese bird spider) protein is Hainantoxin-III 6.